The sequence spans 287 residues: Prepilin leader peptidase/N-methyltransferase (287 aa).

Residues 12 to 32 (FMYLVVGLFSLAVGSLLNVII) form a helical membrane-spanning segment. Cysteine 71, cysteine 74, cysteine 96, and cysteine 99 together coordinate Zn(2+). The next 5 membrane-spanning stretches (helical) occupy residues 127 to 147 (FTIQ…LVFI), 158 to 178 (LTLG…FVSL), 182 to 202 (VLSC…FYLM), 215 to 235 (LFAA…LLIS), and 259 to 279 (PFGP…DSII).

Belongs to the peptidase A24 family. The cofactor is Zn(2+).

It localises to the cell inner membrane. It catalyses the reaction Typically cleaves a -Gly-|-Phe- bond to release an N-terminal, basic peptide of 5-8 residues from type IV prepilin, and then N-methylates the new N-terminal amino group, the methyl donor being S-adenosyl-L-methionine.. In terms of biological role, plays an essential role in type IV pili and type II pseudopili formation by proteolytically removing the leader sequence from substrate proteins and subsequently monomethylating the alpha-amino group of the newly exposed N-terminal phenylalanine. The sequence is that of Prepilin leader peptidase/N-methyltransferase (pilD) from Legionella pneumophila.